Reading from the N-terminus, the 162-residue chain is Beta-lactoglobulin-1 (162 aa).

Disulfide bonds link Cys-66/Cys-160 and Cys-106/Cys-119.

Belongs to the calycin superfamily. Lipocalin family. In terms of assembly, monomer.

It localises to the secreted. In terms of biological role, lactoglobulin is the primary component of whey, it binds retinol and is probably involved in the transport of that molecule. This is Beta-lactoglobulin-1 (LGB1) from Felis catus (Cat).